The chain runs to 288 residues: Mortality factor 4-like protein 2 (288 aa).

Polar residues predominate over residues 1-15 (MSSRKQGSQPRGQQS). The segment at 1-113 (MSSRKQGSQP…RADPTVESEE (113 aa)) is disordered. Residue Ser-71 is modified to Phosphoserine. Positions 117-288 (NRMEVKVKIP…ASAEYHRKAL (172 aa)) constitute an MRG domain.

Component of the NuA4 histone acetyltransferase complex which contains the catalytic subunit KAT5/TIP60 and the subunits EP400, TRRAP/PAF400, BRD8/SMAP, EPC1, DMAP1/DNMAP1, RUVBL1/TIP49, RUVBL2, ING3, actin, ACTL6A/BAF53A, MORF4L1/MRG15, MORF4L2/MRGX, MRGBP, YEATS4/GAS41 and VPS72/YL1. The NuA4 complex interacts with MYC and the adenovirus E1A protein. MORF4L1 may also participate in the formation of NuA4 related complexes which lack the KAT5/TIP60 catalytic subunit, but which include the SWI/SNF related protein SRCAP. Component of the MSIN3A histone deacetylase complex, which includes SIN3A, HDAC2, ARID4B, MORF4L1, RBBP4/RbAp48, and RBBP7/RbAp46. Interacts with MRFAP1 and RB1. May also interact with one or more as yet undefined members of the TLE (transducin-like enhancer of split) family of transcriptional repressors.

Its subcellular location is the nucleus. Component of the NuA4 histone acetyltransferase complex which is involved in transcriptional activation of select genes principally by acetylation of nucleosomal histone H4 and H2A. This modification may both alter nucleosome - DNA interactions and promote interaction of the modified histones with other proteins which positively regulate transcription. This complex may be required for the activation of transcriptional programs associated with oncogene and proto-oncogene mediated growth induction, tumor suppressor mediated growth arrest and replicative senescence, apoptosis, and DNA repair. The NuA4 complex ATPase and helicase activities seem to be, at least in part, contributed by the association of RUVBL1 and RUVBL2 with EP400. NuA4 may also play a direct role in DNA repair when directly recruited to sites of DNA damage. Also a component of the MSIN3A complex which acts to repress transcription by deacetylation of nucleosomal histones. The protein is Mortality factor 4-like protein 2 (MORF4L2) of Macaca fascicularis (Crab-eating macaque).